A 455-amino-acid chain; its full sequence is Probable circularly permuted 1,3-beta-glucanase TOS1 (455 aa).

A signal peptide spans 1 to 23; that stretch reads MLQKLSMTALVGLFSSVVSLVNA. Residues 158–221 form a disordered region; it reads TADSTNTVVG…SSSSSSNTNG (64 aa). The segment covering 172 to 189 has biased composition (polar residues); sequence SSYTKDSTVLSSSAQAVE. Low complexity predominate over residues 190 to 219; it reads TSESQSSISSSKTTSSAAAASSSSSSSSNT. The N-linked (GlcNAc...) asparagine glycan is linked to Asn236. An ExDxxE motif motif is present at residues 372-377; the sequence is EMDLFE. An N-linked (GlcNAc...) asparagine glycan is attached at Asn417.

It belongs to the PGA52 family.

The protein resides in the secreted. Its subcellular location is the cell wall. It catalyses the reaction Hydrolysis of (1-&gt;3)-beta-D-glucosidic linkages in (1-&gt;3)-beta-D-glucans.. Functionally, probable circularly permuted 1,3-beta-glucanase involved in cell wall modification through beta-1,3-glucan network alterations such as increased branching or remodeling. This chain is Probable circularly permuted 1,3-beta-glucanase TOS1, found in Saccharomyces cerevisiae (strain ATCC 204508 / S288c) (Baker's yeast).